The chain runs to 373 residues: 3-dehydroquinate synthase (373 aa).

NAD(+) contacts are provided by residues 74–79 (DAEAGK), 108–112 (GAATD), 132–133 (TT), Lys-145, Lys-154, and 172–175 (TLET). The Zn(2+) site is built by Glu-187, His-250, and His-266.

This sequence belongs to the sugar phosphate cyclases superfamily. Dehydroquinate synthase family. Requires Co(2+) as cofactor. Zn(2+) is required as a cofactor. It depends on NAD(+) as a cofactor.

The protein localises to the cytoplasm. The enzyme catalyses 7-phospho-2-dehydro-3-deoxy-D-arabino-heptonate = 3-dehydroquinate + phosphate. It functions in the pathway metabolic intermediate biosynthesis; chorismate biosynthesis; chorismate from D-erythrose 4-phosphate and phosphoenolpyruvate: step 2/7. Functionally, catalyzes the conversion of 3-deoxy-D-arabino-heptulosonate 7-phosphate (DAHP) to dehydroquinate (DHQ). This chain is 3-dehydroquinate synthase, found in Nocardia farcinica (strain IFM 10152).